Reading from the N-terminus, the 320-residue chain is Porphobilinogen deaminase (320 aa).

Position 241 is an S-(dipyrrolylmethanemethyl)cysteine (cysteine 241).

This sequence belongs to the HMBS family. Monomer. Dipyrromethane is required as a cofactor.

It catalyses the reaction 4 porphobilinogen + H2O = hydroxymethylbilane + 4 NH4(+). It participates in porphyrin-containing compound metabolism; protoporphyrin-IX biosynthesis; coproporphyrinogen-III from 5-aminolevulinate: step 2/4. Functionally, tetrapolymerization of the monopyrrole PBG into the hydroxymethylbilane pre-uroporphyrinogen in several discrete steps. In Thermobifida fusca (strain YX), this protein is Porphobilinogen deaminase.